Here is an 819-residue protein sequence, read N- to C-terminus: MSDVVLLVLAIILITIFTLIYYTIFFEFDETTFSKRLQVLTEYAKRTNADKPTPDVLGHVSDVYDHTYIVSWFKTDDLSTYHETVHDDTVEVFDFLEQRFAAAAAAVAHRVAPLAAEPDAFVVTGDAGDVKLRCPQHFRFDYDQLKCVPVDPCAGRAPGRYPMDERLLDTLVHNQPSDKDYSAGEHLHHPTLYLRCLADGSHAVRECPDNYTFDAASGECRVNELCEGRPDGFVLAYFPETLRVNEFVECRGGKHVVARCPDQQVFDRALMTCVQTHPCAFNGAGHTYITADIGDAQFFKCLNDREAQLITCINRVRGADGQYACSGDARCADLPDGTGRLMHTHTDDTFEYVSGQTICDNYNVISEIECDTGNVLENKLFVNKFTLGAQFPREVLDAGVCAPATLNNVRVLSDAFPVENLPNDYKVDMQTSVVGLATMMADLTTGADPDTAFGQNVLLAREVDAVGLSPLTAESIDCFGARLFDVMDARRANVCTESGGDLLRTIEFGDGAFLSVFRDDLTGSDADYKQFCAISYESPLKIVNSDHFERRILANILQADICAELYTTIYQKYTTLARKYTTASPKYNYTFVKRPPNIVVYAENTHLKNSTISVPTFDPFAPQPADNKIGPTNALFDPFADRVWRSEPGGDGDHWAPEAPPTQPEAPPAPEPSPLILDKKELFYSCYYELPTFKLTSCHAENDVIIDALQQLRAAVEVDPGCEPAKDLHFVLNAYAYMGNGVGCRSVFDGNNVTVIKEPVPTYTFNNLQTQSDDGVRYNKHVHVKDGRYMACPEHLYDGAAFACNAEPDKLYYLDNMQK.

The N-terminal stretch at 1-18 (MSDVVLLVLAIILITIFT) is a signal peptide. The segment at 147–196 (CVPVDPCAGRAPGRYPMDERLLDTLVHNQPSDKDYSAGEHLHHPTLYLRC) adopts a C2HC BV-type zinc-finger fold. Cystine bridges form between Cys207-Cys220 and Cys260-Cys273. Residue Asn210 is glycosylated (N-linked (GlcNAc...) asparagine; by host). In terms of domain architecture, Chitin-binding type-2 spans 223-281 (NELCEGRPDGFVLAYFPETLRVNEFVECRGGKHVVARCPDQQVFDRALMTCVQTHPCAF). 2 N-linked (GlcNAc...) asparagine; by host glycosylation sites follow: Asn588 and Asn609. The interval 650 to 671 (GDGDHWAPEAPPTQPEAPPAPE) is disordered. Pro residues predominate over residues 658-671 (EAPPTQPEAPPAPE). N-linked (GlcNAc...) asparagine; by host glycosylation is present at Asn752.

It localises to the virion. Probable capsid-associated protein. The sequence is that of Capsid-associated protein Vp91 (p91) from Orgyia pseudotsugata (Douglas-fir tussock moth).